Consider the following 93-residue polypeptide: UPF0223 protein LACR_0546 (93 aa).

This sequence belongs to the UPF0223 family.

In Lactococcus lactis subsp. cremoris (strain SK11), this protein is UPF0223 protein LACR_0546.